A 228-amino-acid chain; its full sequence is Peptide deformylase (228 aa).

Disordered regions lie at residues 1-28 and 116-138; these read MSQD…EGAV and GVPK…EPDR. Polar residues-rich tracts occupy residues 8-18 and 123-133; these read TGCNTHSNTHS and NKQQANNSTSC. 2 residues coordinate Fe cation: Cys141 and His183. Glu184 is an active-site residue. His187 lines the Fe cation pocket.

It belongs to the polypeptide deformylase family. Fe(2+) is required as a cofactor.

The catalysed reaction is N-terminal N-formyl-L-methionyl-[peptide] + H2O = N-terminal L-methionyl-[peptide] + formate. Its function is as follows. Removes the formyl group from the N-terminal Met of newly synthesized proteins. Requires at least a dipeptide for an efficient rate of reaction. N-terminal L-methionine is a prerequisite for activity but the enzyme has broad specificity at other positions. This is Peptide deformylase from Tropheryma whipplei (strain Twist) (Whipple's bacillus).